The primary structure comprises 256 residues: Hydroxyacylglutathione hydrolase (256 aa).

Zn(2+)-binding residues include His53, His55, Asp57, His58, His111, Asp128, and His166.

Belongs to the metallo-beta-lactamase superfamily. Glyoxalase II family. Monomer. The cofactor is Zn(2+).

It catalyses the reaction an S-(2-hydroxyacyl)glutathione + H2O = a 2-hydroxy carboxylate + glutathione + H(+). It participates in secondary metabolite metabolism; methylglyoxal degradation; (R)-lactate from methylglyoxal: step 2/2. Functionally, thiolesterase that catalyzes the hydrolysis of S-D-lactoyl-glutathione to form glutathione and D-lactic acid. In Thiobacillus denitrificans (strain ATCC 25259 / T1), this protein is Hydroxyacylglutathione hydrolase.